The following is a 401-amino-acid chain: Formate-dependent phosphoribosylglycinamide formyltransferase (401 aa).

N(1)-(5-phospho-beta-D-ribosyl)glycinamide contacts are provided by residues 27–28 (EL) and Glu87. ATP is bound by residues Arg119, Lys160, 165–170 (SSGKGQ), 200–203 (EELV), and Glu208. The 190-residue stretch at 124–313 (EFAAEEVGVT…QFDLHLRAIL (190 aa)) folds into the ATP-grasp domain. Mg(2+)-binding residues include Glu272 and Glu284. N(1)-(5-phospho-beta-D-ribosyl)glycinamide-binding positions include Asp291, Lys361, and 368–369 (RR).

This sequence belongs to the PurK/PurT family. In terms of assembly, homodimer.

It carries out the reaction N(1)-(5-phospho-beta-D-ribosyl)glycinamide + formate + ATP = N(2)-formyl-N(1)-(5-phospho-beta-D-ribosyl)glycinamide + ADP + phosphate + H(+). The protein operates within purine metabolism; IMP biosynthesis via de novo pathway; N(2)-formyl-N(1)-(5-phospho-D-ribosyl)glycinamide from N(1)-(5-phospho-D-ribosyl)glycinamide (formate route): step 1/1. Its function is as follows. Involved in the de novo purine biosynthesis. Catalyzes the transfer of formate to 5-phospho-ribosyl-glycinamide (GAR), producing 5-phospho-ribosyl-N-formylglycinamide (FGAR). Formate is provided by PurU via hydrolysis of 10-formyl-tetrahydrofolate. In Haloquadratum walsbyi (strain DSM 16790 / HBSQ001), this protein is Formate-dependent phosphoribosylglycinamide formyltransferase.